The sequence spans 701 residues: Elongation factor G (701 aa).

Positions 8-290 (SRYRNIGISA…AVIEYLPAPT (283 aa)) constitute a tr-type G domain. GTP contacts are provided by residues 17-24 (AHIDAGKT), 88-92 (DTPGH), and 142-145 (NKMD).

It belongs to the TRAFAC class translation factor GTPase superfamily. Classic translation factor GTPase family. EF-G/EF-2 subfamily.

Its subcellular location is the cytoplasm. Catalyzes the GTP-dependent ribosomal translocation step during translation elongation. During this step, the ribosome changes from the pre-translocational (PRE) to the post-translocational (POST) state as the newly formed A-site-bound peptidyl-tRNA and P-site-bound deacylated tRNA move to the P and E sites, respectively. Catalyzes the coordinated movement of the two tRNA molecules, the mRNA and conformational changes in the ribosome. This chain is Elongation factor G, found in Actinobacillus pleuropneumoniae serotype 5b (strain L20).